Consider the following 978-residue polypeptide: Regulator of telomere elongation helicase 1 homolog (978 aa).

A Helicase ATP-binding domain is found at 7-318; the sequence is NGIPVNFPFE…EDDDAKKDFT (312 aa). 42 to 49 contacts ATP; it reads SPTGTGKT. [4Fe-4S] cluster-binding residues include cysteine 159, cysteine 177, cysteine 186, and cysteine 222. A DEAH box motif is present at residues 265 to 268; that stretch reads DEAH.

Belongs to the helicase family. RAD3/XPD subfamily.

Its subcellular location is the nucleus. It catalyses the reaction ATP + H2O = ADP + phosphate + H(+). Functionally, a probable ATP-dependent DNA helicase implicated in DNA repair and the maintenance of genomic stability. Acts as an anti-recombinase to counteract toxic recombination and limit crossover during meiosis. Regulates meiotic recombination and crossover homeostasis by physically dissociating strand invasion events and thereby promotes noncrossover repair by meiotic synthesis dependent strand annealing (SDSA) as well as disassembly of D loop recombination intermediates. This chain is Regulator of telomere elongation helicase 1 homolog, found in Culex quinquefasciatus (Southern house mosquito).